Reading from the N-terminus, the 568-residue chain is MTLRLSRRAYAEMFGPTTGDRVRLADTELLIEIERDFTTYGEEVKFGGGKVIRDGMGQSQRVAADVPDTVITNAVILDHWGIVKADIAIKHGRIAAIGKAGNPDIQPGVTIAIGAATEVIAGEGLIVTAGGIDTHIHFISPQQIDEALASGVTTMLGGGTGPATGTNATTCTPGPWHMERMLQAADGWPINLGFLGKGNASLPQPLVEQIAAGAIGLKLHEDWGTTPAAIDNCLSVADDTDTQVAIHTDTLNEAGFVESTVAAFKGRTIHTYHTEGAGGGHAPDILKVCGEMNVLPSSTNPTRPYTINTLDEHLDMLMVCHHLDPSIAEDLAFAESRIRRETIAAEDILHDLGALSMLSSDSQAMGRVGEVIIRTWQTAHKMKVQRGALPEDTARNDNFRAKRYVAKYTINPALTHGIAHEVGSIEPGKWADLVLWEPAFFGIKPSMILKGGMIALAQMGDPNASIPTPQPVHYREMFATRGGALARTSLTFVSQMAADAGIAERYGLAKRIVPVRNCRNVTKADMIHNAWRPSISVDPETYDVIADGQLLTCEPATVLPMAQRYFLF.

The 439-residue stretch at 130 to 568 (GGIDTHIHFI…LPMAQRYFLF (439 aa)) folds into the Urease domain. Residues His-135, His-137, and Lys-218 each contribute to the Ni(2+) site. Position 218 is an N6-carboxylysine (Lys-218). A substrate-binding site is contributed by His-220. Ni(2+)-binding residues include His-247 and His-273. Residue His-321 is the Proton donor of the active site. Position 361 (Asp-361) interacts with Ni(2+).

The protein belongs to the metallo-dependent hydrolases superfamily. Urease alpha subunit family. Heterotrimer of UreA (gamma), UreB (beta) and UreC (alpha) subunits. Three heterotrimers associate to form the active enzyme. The cofactor is Ni cation. Carboxylation allows a single lysine to coordinate two nickel ions.

The protein resides in the cytoplasm. It carries out the reaction urea + 2 H2O + H(+) = hydrogencarbonate + 2 NH4(+). It functions in the pathway nitrogen metabolism; urea degradation; CO(2) and NH(3) from urea (urease route): step 1/1. This Burkholderia cenocepacia (strain ATCC BAA-245 / DSM 16553 / LMG 16656 / NCTC 13227 / J2315 / CF5610) (Burkholderia cepacia (strain J2315)) protein is Urease subunit alpha.